The primary structure comprises 82 residues: uncharacterized protein (82 aa).

Residues 55–64 (DQNTAPSTPS) are compositionally biased toward polar residues. The tract at residues 55–82 (DQNTAPSTPSKILPKRLPSQSNLNNNNN) is disordered.

This is an uncharacterized protein from Dictyostelium discoideum (Social amoeba).